The chain runs to 432 residues: uncharacterized protein (432 aa).

Positions 1–18 (MAIGDKRKKNRKNKQNKK) are enriched in basic residues. 3 disordered regions span residues 1-23 (MAIG…KNDN), 37-56 (NSNS…NGNG), and 122-168 (STNS…GSSL). Composition is skewed to low complexity over residues 37–53 (NSNS…NNKN), 122–147 (STNS…QQQQ), and 154–168 (ESQS…GSSL). The stretch at 181–226 (LNDQLKIVQLEQKIVNLEKEIQRMRNEQNQIHKQNLNQYHELLKQI) forms a coiled coil. Disordered stretches follow at residues 270 to 290 (VQPV…KSNG) and 310 to 432 (SSKF…STLR). The span at 274–288 (STPSSSSNSLASKKS) shows a compositional bias: low complexity. The span at 311–324 (SKFAQSNSSPSRVN) shows a compositional bias: polar residues. Residues 352 to 378 (KKSATTTTTSSSSNNATTTTAKGSTST) show a composition bias toward low complexity. The span at 383 to 414 (ITNSNNIKNSVLSPKSITKPNTPSNIIFSPLS) shows a compositional bias: polar residues.

This is an uncharacterized protein from Dictyostelium discoideum (Social amoeba).